A 322-amino-acid chain; its full sequence is Mitochondrial thiamine pyrophosphate carrier 1 (322 aa).

Solcar repeat units follow at residues 12–111 (GSKT…VTLG), 122–208 (PAAA…LRLP), and 215–310 (PFGS…VLGI). Helical transmembrane passes span 18–38 (MIAG…LDVV), 92–108 (LMYV…YRSV), 128–148 (FIAG…LDLL), 180–200 (FFQG…IFFA), 221–241 (ASAG…FDLI), and 285–302 (GLTV…VTMW).

It belongs to the mitochondrial carrier (TC 2.A.29) family.

It is found in the mitochondrion inner membrane. Its function is as follows. Mitochondrial transporter that mediates uptake of thiamine pyrophosphate (ThPP) into mitochondria. The sequence is that of Mitochondrial thiamine pyrophosphate carrier 1 (tpc1) from Botryotinia fuckeliana (strain B05.10) (Noble rot fungus).